An 835-amino-acid polypeptide reads, in one-letter code: Bifunctional uridylyltransferase/uridylyl-removing enzyme (835 aa).

Residues 1-316 (MTDEAEDSGP…GGKPVAERSP (316 aa)) form a uridylyltransferase region. The uridylyl-removing stretch occupies residues 317-650 (LAEGVVEQDG…SADGPEPLGV (334 aa)). The HD domain maps to 431 to 554 (VDRHLIETAV…DALATGPAAW (124 aa)). Residues 610-645 (QTEPPADSAPAPSSPSSPSFPSPLSSPSSPSSADGP) form a disordered region. The segment covering 621 to 630 (PSSPSSPSFP) has biased composition (pro residues). Low complexity predominate over residues 631–642 (SPLSSPSSPSSA). ACT domains lie at 651–736 (ELLI…LAER) and 765–835 (VIEV…SLRT).

The protein belongs to the GlnD family. Mg(2+) serves as cofactor.

The catalysed reaction is [protein-PII]-L-tyrosine + UTP = [protein-PII]-uridylyl-L-tyrosine + diphosphate. The enzyme catalyses [protein-PII]-uridylyl-L-tyrosine + H2O = [protein-PII]-L-tyrosine + UMP + H(+). With respect to regulation, uridylyltransferase (UTase) activity is inhibited by glutamine, while glutamine activates uridylyl-removing (UR) activity. Functionally, modifies, by uridylylation and deuridylylation, the PII regulatory proteins (GlnB and homologs), in response to the nitrogen status of the cell that GlnD senses through the glutamine level. Under low glutamine levels, catalyzes the conversion of the PII proteins and UTP to PII-UMP and PPi, while under higher glutamine levels, GlnD hydrolyzes PII-UMP to PII and UMP (deuridylylation). Thus, controls uridylylation state and activity of the PII proteins, and plays an important role in the regulation of nitrogen assimilation and metabolism. The polypeptide is Bifunctional uridylyltransferase/uridylyl-removing enzyme (Streptomyces coelicolor (strain ATCC BAA-471 / A3(2) / M145)).